A 227-amino-acid polypeptide reads, in one-letter code: Translation initiation factor 6 (227 aa).

It belongs to the eIF-6 family.

Functionally, binds to the 50S ribosomal subunit and prevents its association with the 30S ribosomal subunit to form the 70S initiation complex. The protein is Translation initiation factor 6 of Pyrococcus furiosus (strain ATCC 43587 / DSM 3638 / JCM 8422 / Vc1).